The chain runs to 621 residues: DNA-directed RNA polymerase subunit gamma (621 aa).

Asp-463, Asp-465, and Asp-467 together coordinate Mg(2+).

The protein belongs to the RNA polymerase beta' chain family. RpoC1 subfamily. In cyanobacteria the RNAP catalytic core is composed of 2 alpha, 1 beta, 1 beta', 1 gamma and 1 omega subunit. When a sigma factor is associated with the core the holoenzyme is formed, which can initiate transcription. Requires Mg(2+) as cofactor.

It catalyses the reaction RNA(n) + a ribonucleoside 5'-triphosphate = RNA(n+1) + diphosphate. Its function is as follows. DNA-dependent RNA polymerase catalyzes the transcription of DNA into RNA using the four ribonucleoside triphosphates as substrates. The protein is DNA-directed RNA polymerase subunit gamma of Nostoc commune.